Reading from the N-terminus, the 363-residue chain is Probable cinnamyl alcohol dehydrogenase 6 (363 aa).

Zn(2+) is bound at residue Cys-51. Ser-53 serves as a coordination point for NADP(+). The Zn(2+) site is built by His-73, Glu-74, Cys-104, Cys-107, Cys-110, Cys-118, and Cys-167. NADP(+) is bound by residues Ser-171, 192-197 (GLGGLG), 215-220 (SSTTGK), Thr-255, Gly-279, and 302-304 (SGI).

The protein belongs to the zinc-containing alcohol dehydrogenase family. In terms of assembly, homodimer. It depends on Zn(2+) as a cofactor. As to expression, expressed in the primary and lateral roots, and root caps. Expressed in the hypocotyl, cotyledon veins and hydathodes. In stems, expressed in the vascular cambium, interfascicular cambium and developing xylem. Expressed in the style, anthers, stamen filaments, vascular tissues of sepals, stigmatic regions in flowers, and abscission and style regions of siliques.

The enzyme catalyses (E)-cinnamyl alcohol + NADP(+) = (E)-cinnamaldehyde + NADPH + H(+). It carries out the reaction (E)-coniferol + NADP(+) = (E)-coniferaldehyde + NADPH + H(+). It catalyses the reaction (E)-sinapyl alcohol + NADP(+) = (E)-sinapaldehyde + NADPH + H(+). The catalysed reaction is (E)-4-coumaroyl alcohol + NADP(+) = (E)-4-coumaraldehyde + NADPH + H(+). The enzyme catalyses (E)-caffeyl alcohol + NADP(+) = (E)-caffeyl aldehyde + NADPH + H(+). The protein operates within aromatic compound metabolism; phenylpropanoid biosynthesis. Its function is as follows. Involved in lignin biosynthesis. Catalyzes the final step specific for the production of lignin monomers. Catalyzes the NADPH-dependent reduction of coniferaldehyde, 5-hydroxyconiferaldehyde, sinapaldehyde, 4-coumaraldehyde and caffeyl aldehyde to their respective alcohols. The protein is Probable cinnamyl alcohol dehydrogenase 6 (CAD6) of Arabidopsis thaliana (Mouse-ear cress).